The chain runs to 91 residues: Cell division protein ZapA (91 aa).

Residues 59–86 (TAVNIANEYLKLKEEYDRLAAKLRREKG) are a coiled coil.

This sequence belongs to the ZapA family. Type 2 subfamily. As to quaternary structure, homodimer. Interacts with FtsZ.

Its subcellular location is the cytoplasm. In terms of biological role, activator of cell division through the inhibition of FtsZ GTPase activity, therefore promoting FtsZ assembly into bundles of protofilaments necessary for the formation of the division Z ring. It is recruited early at mid-cell but it is not essential for cell division. The protein is Cell division protein ZapA of Geobacillus thermodenitrificans (strain NG80-2).